We begin with the raw amino-acid sequence, 241 residues long: CD99 antigen-like protein 2 (241 aa).

A signal peptide spans 1-23; that stretch reads MAKWGSPFVFALACLALSWRVYG. Residues 24 to 173 are Extracellular-facing; that stretch reads DDFDLYDALG…TGFGSQAETG (150 aa). Residues 30-168 are disordered; it reads DALGDPTEKP…NDGSDTGFGS (139 aa). The span at 143–154 shows a compositional bias: gly residues; the sequence is GGGGGGGGGRAT. The chain crosses the membrane as a helical span at residues 174-196; that stretch reads TIAGIASALAMALIGAVSSYISY. Residues 197–241 are Cytoplasmic-facing; sequence QQKKFCFSIQEGLNAEYVKGEHMEAVVSEEPQVKYSVVESQSAIP.

The protein belongs to the CD99 family.

It is found in the cell membrane. The protein localises to the cell junction. In terms of biological role, may function as a homophilic adhesion molecule. This is CD99 antigen-like protein 2 (cd99l2) from Xenopus tropicalis (Western clawed frog).